Here is a 718-residue protein sequence, read N- to C-terminus: Acetolactate synthase, mitochondrial (718 aa).

Disordered regions lie at residues 1–50 (MLTR…APVY) and 72–101 (RKIQSSASTAAASPAVRPQPAQHFQAAPQP). Residues 32–45 (RYSNNIHTSSTQNA) are compositionally biased toward polar residues. Over residues 76 to 99 (SSASTAAASPAVRPQPAQHFQAAP) the composition is skewed to low complexity. Residue Glu-173 coordinates thiamine diphosphate. Arg-275 is an FAD binding site. The segment at 296–327 (IPAKSAQPGHSPYLPSNPLNPSSQPSDPLPGD) is disordered. The span at 306-325 (SPYLPSNPLNPSSQPSDPLP) shows a compositional bias: low complexity. FAD is bound by residues 397-418 (HGSAYANFAMQEADVLIALGVR) and 449-468 (EIQPKNINKIVEAQIPVLGD). Residues 541 to 621 (QHQMWACQYY…VKVLLFNNEF (81 aa)) are thiamine pyrophosphate binding. Mg(2+)-binding residues include Asp-592 and Asn-619.

It belongs to the TPP enzyme family. The cofactor is Mg(2+). Requires thiamine diphosphate as cofactor.

The protein resides in the mitochondrion. The catalysed reaction is 2 pyruvate + H(+) = (2S)-2-acetolactate + CO2. It functions in the pathway amino-acid biosynthesis; L-isoleucine biosynthesis; L-isoleucine from 2-oxobutanoate: step 1/4. It participates in amino-acid biosynthesis; L-valine biosynthesis; L-valine from pyruvate: step 1/4. The chain is Acetolactate synthase, mitochondrial (ILV2) from Cryptococcus neoformans var. neoformans serotype D (strain JEC21 / ATCC MYA-565) (Filobasidiella neoformans).